The chain runs to 78 residues: Pigment-dispersing hormone 2 peptides (78 aa).

A signal peptide spans 1-21 (MRSGVFVAVLVVVVFALLTQG). Alanine 75 carries the post-translational modification Alanine amide.

It belongs to the arthropod PDH family. In terms of tissue distribution, eyestalk sinus gland.

The protein localises to the secreted. The pigment-dispersing hormone causes the migration of the distal retinal pigment into the proximal end of the pigment chromatophore cells and thus decreases the amount of light entering the retinulas. May also function as a neurotransmitter and/or neuromodulator. The protein is Pigment-dispersing hormone 2 peptides (PDH2) of Callinectes sapidus (Blue crab).